The chain runs to 147 residues: Large ribosomal subunit protein uL15 (147 aa).

Positions 1–54 are disordered; sequence MRLSDIKPTPGSMKKRTRVGRGIGSGKGKTSGKGHKGQKARGRGKVHPWFEGGQ. Positions 30–46 are enriched in basic residues; that stretch reads TSGKGHKGQKARGRGKV.

It belongs to the universal ribosomal protein uL15 family. In terms of assembly, part of the 50S ribosomal subunit.

Binds to the 23S rRNA. The chain is Large ribosomal subunit protein uL15 from Thermosipho melanesiensis (strain DSM 12029 / CIP 104789 / BI429).